The sequence spans 86 residues: Neurotoxin 3FTx-RK (86 aa).

Positions 1 to 21 (MKTLLLTLVVVTIVCLELGYT) are cleaved as a signal peptide. Cystine bridges form between C24-C45, C38-C63, C67-C78, and C79-C84.

In terms of tissue distribution, expressed by the venom gland.

It localises to the secreted. This Bungarus fasciatus (Banded krait) protein is Neurotoxin 3FTx-RK.